The following is a 984-amino-acid chain: PAX-interacting protein 1 (984 aa).

BRCT domains follow at residues 8–93 (VPEE…GFSP) and 94–183 (ESCQ…LYHP). The interaction with PAGR1 stretch occupies residues 94 to 183 (ESCQIFFGIT…TRKDEALYHP (90 aa)). Disordered stretches follow at residues 187–271 (VYEE…PAEV) and 417–509 (QQHL…LFGH). Over residues 188–208 (YEEEEEEEEEEEGAGNEEPDS) the composition is skewed to acidic residues. Residues 217–229 (KSSPASSQEGSPS) show a composition bias toward low complexity. Residues S227 and S235 each carry the phosphoserine modification. The segment covering 424 to 454 (PYPPPPPHPFPPPPAHPHQFPQPPLQRPQPP) has biased composition (pro residues). Residues 455–485 (LQQQQLSHLQQQQLQHLQRLQQMQPTPTAQL) are compositionally biased toward low complexity. The segment covering 486–499 (PGPPAQALQPPPPQ) has biased composition (pro residues). The segment at 505–984 (PLFGHDPAVE…TLDYESYKFN (480 aa)) is interaction with TP53BP1. BRCT domains follow at residues 516–609 (PEEG…RALH) and 616–704 (PGGK…TQYG). A Nuclear localization signal motif is present at residues 583-600 (RKRCITAHWLNTVLKKKK). The interval 750–771 (KQNEVTNVQPSSKRARIEDIPP) is disordered. Residues 752–761 (NEVTNVQPSS) show a composition bias toward polar residues. BRCT domains follow at residues 781-862 (TPFV…NYLL) and 883-924 (HASP…QPSF).

In terms of assembly, interacts with the C-terminal transactivation domain of PAX2. Forms a constitutive complex with PAGR1 independently of the MLL2/MLL3 complex. Interacts with TP53BP1 (when phosphorylated at the N-terminus by ATM). Interacts with HLTF. Component of the KMT2 family MLL2/MLL3 complex (also named ASCOM complex), at least composed of the HMTs KMT2D and/or KMT2C, the common subunits ASH2L, RBBP5, WDR5 and DPY30, and the complex type-specific subunits PAXIP1/PTIP, PAGR1, NCOA6 and KDM6A; required for the association of PAGR1 with the MLL2/MLL3 complex. Interacts with NUPR1; this interaction prevents PAXIP1 inhibition of PAX2 transcription factor activity.

Its subcellular location is the nucleus matrix. The protein localises to the chromosome. Functionally, involved in DNA damage response and in transcriptional regulation through histone methyltransferase (HMT) complexes. Plays a role in early development. In DNA damage response is required for cell survival after ionizing radiation. In vitro shown to be involved in the homologous recombination mechanism for the repair of double-strand breaks (DSBs). Its localization to DNA damage foci requires RNF8 and UBE2N. Recruits TP53BP1 to DNA damage foci and, at least in particular repair processes, effective DNA damage response appears to require the association with TP53BP1 phosphorylated by ATM at 'Ser-25'. Together with TP53BP1 regulates ATM association. Proposed to recruit PAGR1 to sites of DNA damage and the PAGR1:PAXIP1 complex is required for cell survival in response to DNA damage; the function is probably independent of MLL-containing histone methyltransferase (HMT) complexes. However, this function has been questioned. Promotes ubiquitination of PCNA following UV irradiation and may regulate recruitment of polymerase eta and RAD51 to chromatin after DNA damage. Proposed to be involved in transcriptional regulation by linking MLL-containing histone methyltransferase (HMT) complexes to gene promoters by interacting with promoter-bound transcription factors such as PAX2. Associates with gene promoters that are known to be regulated by KMT2D/MLL2. During immunoglobulin class switching in activated B-cells is involved in trimethylation of histone H3 at 'Lys-4' and in transcription initiation of downstream switch regions at the immunoglobulin heavy-chain (Igh) locus; this function appears to involve the recruitment of MLL-containing HMT complexes. Conflictingly, its function in transcriptional regulation during immunoglobulin class switching is reported to be independent of the MLL2/MLL3 complex. The protein is PAX-interacting protein 1 (PAXIP1) of Bos taurus (Bovine).